The chain runs to 81 residues: PKYTIVDKETCIACGACGAAAPDIYDYDEDGIAYVTLDDNQGIVEVPDILIDDMMDAFEGCPTDSIKVADEPFDGDPNKFE.

The region spanning 2–30 (KYTIVDKETCIACGACGAAAPDIYDYDED) is the 4Fe-4S ferredoxin-type domain. Positions 11, 14, 17, and 61 each coordinate [4Fe-4S] cluster.

Requires [4Fe-4S] cluster as cofactor.

Ferredoxins are iron-sulfur proteins that transfer electrons in a wide variety of metabolic reactions. This chain is Ferredoxin, found in Bacillus thermoproteolyticus.